Here is a 91-residue protein sequence, read N- to C-terminus: Small ribosomal subunit protein uS19 (91 aa).

The protein belongs to the universal ribosomal protein uS19 family.

Its function is as follows. Protein S19 forms a complex with S13 that binds strongly to the 16S ribosomal RNA. This chain is Small ribosomal subunit protein uS19, found in Methylobacillus flagellatus (strain ATCC 51484 / DSM 6875 / VKM B-1610 / KT).